The sequence spans 83 residues: U25-theraphotoxin-Cg1b (83 aa).

The signal sequence occupies residues 1 to 23 (MRFHTLLFLSFLLLVSCALICTA). The propeptide occupies 24 to 48 (QHPGLEKSGMFHENVGKGQHIEEKR). Cystine bridges form between C50-C66, C57-C71, and C65-C79.

It belongs to the neurotoxin 07 (Beta/delta-agtx) family. 03 (aga-4) subfamily. JZTX sub-subfamily. As to expression, expressed by the venom gland.

It localises to the secreted. In terms of biological role, probable ion channel inhibitor. This is U25-theraphotoxin-Cg1b from Chilobrachys guangxiensis (Chinese earth tiger tarantula).